The chain runs to 236 residues: Small ribosomal subunit protein uS2c (236 aa).

Belongs to the universal ribosomal protein uS2 family.

Its subcellular location is the plastid. It is found in the chloroplast. The sequence is that of Small ribosomal subunit protein uS2c (rps2) from Lolium perenne (Perennial ryegrass).